The chain runs to 57 residues: Large ribosomal subunit protein bL32 (57 aa).

A compositionally biased stretch (basic residues) spans 1 to 19 (MAVPKRRMSRSNTRSRRSQ). The segment at 1-21 (MAVPKRRMSRSNTRSRRSQWK) is disordered.

The protein belongs to the bacterial ribosomal protein bL32 family.

This is Large ribosomal subunit protein bL32 from Mycobacteroides abscessus (strain ATCC 19977 / DSM 44196 / CCUG 20993 / CIP 104536 / JCM 13569 / NCTC 13031 / TMC 1543 / L948) (Mycobacterium abscessus).